We begin with the raw amino-acid sequence, 1070 residues long: uncharacterized protein (1070 aa).

5 disordered regions span residues 66–88 (EKEKETNNENTSNVNKIKSPGLE), 355–388 (DLDFSNVRNKNKEDDMDFSNVRNKKKEDDMDFSN), 423–483 (EDDL…EQID), 667–692 (EELKNDISSETTKEEKNTEHKKEETE), and 735–786 (SKTQ…NNNN). The span at 73-83 (NENTSNVNKIK) shows a compositional bias: low complexity. Basic and acidic residues-rich tracts occupy residues 435 to 460 (KKEESKENDTNKSEKPLYLRRLEEYR) and 474 to 483 (MKMHEKEQID). Residues 475–736 (KMHEKEQIDD…EMRLQLIRSK (262 aa)) are a coiled coil. Residues 735-745 (SKTQGTSSTFI) show a composition bias toward polar residues. Over residues 751–765 (KHLESLKEEKKKEVK) the composition is skewed to basic and acidic residues. A compositionally biased stretch (low complexity) spans 773–786 (NNNNNNNNNNNNNN).

This is an uncharacterized protein from Plasmodium falciparum (isolate 3D7).